The sequence spans 223 residues: 7-cyano-7-deazaguanine synthase (223 aa).

Position 12-22 (12-22 (FSGGQDSTTCL)) interacts with ATP. Positions 189, 198, 201, and 204 each coordinate Zn(2+).

This sequence belongs to the QueC family. As to quaternary structure, homodimer. The cofactor is Zn(2+).

The catalysed reaction is 7-carboxy-7-deazaguanine + NH4(+) + ATP = 7-cyano-7-deazaguanine + ADP + phosphate + H2O + H(+). It participates in purine metabolism; 7-cyano-7-deazaguanine biosynthesis. In terms of biological role, catalyzes the ATP-dependent conversion of 7-carboxy-7-deazaguanine (CDG) to 7-cyano-7-deazaguanine (preQ(0)). The chain is 7-cyano-7-deazaguanine synthase from Halalkalibacterium halodurans (strain ATCC BAA-125 / DSM 18197 / FERM 7344 / JCM 9153 / C-125) (Bacillus halodurans).